Reading from the N-terminus, the 73-residue chain is Plasticin-A1 (73 aa).

An N-terminal signal peptide occupies residues 1 to 22 (MAFLKKSLFLVLFLAIVPLSIC). A propeptide spanning residues 23–42 (EEEKREEENEEKQEDDDQSE) is cleaved from the precursor. A disordered region spans residues 25–45 (EKREEENEEKQEDDDQSEKRG). Residues 30-40 (ENEEKQEDDDQ) show a composition bias toward acidic residues. Residue Gly70 is modified to Glycine amide. Positions 72–73 (ES) are excised as a propeptide.

Belongs to the frog skin active peptide (FSAP) family. Plasticin subfamily. In terms of tissue distribution, expressed by the skin glands.

The protein resides in the secreted. The protein localises to the target cell membrane. In terms of biological role, peptide with no antimicrobial activity. May act in synergy with cationic peptides by enhancing their activity. Has a moderate hemolytic activity. This chain is Plasticin-A1, found in Agalychnis annae (Blue-sided leaf frog).